A 932-amino-acid polypeptide reads, in one-letter code: 2-oxoglutarate dehydrogenase E1 component (932 aa).

The protein belongs to the alpha-ketoglutarate dehydrogenase family. As to quaternary structure, homodimer. Part of the 2-oxoglutarate dehydrogenase (OGDH) complex composed of E1 (2-oxoglutarate dehydrogenase), E2 (dihydrolipoamide succinyltransferase) and E3 (dihydrolipoamide dehydrogenase); the complex contains multiple copies of the three enzymatic components (E1, E2 and E3). The cofactor is thiamine diphosphate.

It catalyses the reaction N(6)-[(R)-lipoyl]-L-lysyl-[protein] + 2-oxoglutarate + H(+) = N(6)-[(R)-S(8)-succinyldihydrolipoyl]-L-lysyl-[protein] + CO2. Its function is as follows. E1 component of the 2-oxoglutarate dehydrogenase (OGDH) complex which catalyzes the decarboxylation of 2-oxoglutarate, the first step in the conversion of 2-oxoglutarate to succinyl-CoA and CO(2). This is 2-oxoglutarate dehydrogenase E1 component from Staphylococcus aureus (strain bovine RF122 / ET3-1).